The sequence spans 64 residues: Thrombin-like enzyme collinein-4 (64 aa).

Intrachain disulfides connect cysteine 5–cysteine 23 and cysteine 34–cysteine 51.

In terms of assembly, monomer. Expressed by the vanom gland.

Its subcellular location is the secreted. In terms of biological role, thrombin-like snake venom serine protease. This is Thrombin-like enzyme collinein-4 from Crotalus durissus collilineatus (Brazilian rattlesnake).